The chain runs to 136 residues: Small ribosomal subunit protein uS9 (136 aa).

The tract at residues 97 to 136 (SPDNRKPLKTEGHLSRDPRAKERRKYGLKKARKAPQFSKR) is disordered. Over residues 98 to 116 (PDNRKPLKTEGHLSRDPRA) the composition is skewed to basic and acidic residues. Residues 117 to 136 (KERRKYGLKKARKAPQFSKR) show a composition bias toward basic residues.

The protein belongs to the universal ribosomal protein uS9 family.

In Prochlorococcus marinus (strain AS9601), this protein is Small ribosomal subunit protein uS9.